The sequence spans 356 residues: 1-deoxy-D-xylulose 5-phosphate reductoisomerase (356 aa).

Residues threonine 7, glycine 8, serine 9, isoleucine 10, glycine 31, asparagine 33, and asparagine 111 each contribute to the NADPH site. Residue lysine 112 coordinates 1-deoxy-D-xylulose 5-phosphate. Glutamate 113 serves as a coordination point for NADPH. Residue aspartate 131 coordinates Mn(2+). Serine 132, glutamate 133, serine 155, and histidine 178 together coordinate 1-deoxy-D-xylulose 5-phosphate. Residue glutamate 133 participates in Mn(2+) binding. Glycine 184 is an NADPH binding site. Residues serine 191, asparagine 196, lysine 197, and glutamate 200 each coordinate 1-deoxy-D-xylulose 5-phosphate. Position 200 (glutamate 200) interacts with Mn(2+).

Belongs to the DXR family. Mg(2+) serves as cofactor. Requires Mn(2+) as cofactor.

It carries out the reaction 2-C-methyl-D-erythritol 4-phosphate + NADP(+) = 1-deoxy-D-xylulose 5-phosphate + NADPH + H(+). Its pathway is isoprenoid biosynthesis; isopentenyl diphosphate biosynthesis via DXP pathway; isopentenyl diphosphate from 1-deoxy-D-xylulose 5-phosphate: step 1/6. In terms of biological role, catalyzes the NADPH-dependent rearrangement and reduction of 1-deoxy-D-xylulose-5-phosphate (DXP) to 2-C-methyl-D-erythritol 4-phosphate (MEP). This is 1-deoxy-D-xylulose 5-phosphate reductoisomerase from Campylobacter jejuni subsp. jejuni serotype O:6 (strain 81116 / NCTC 11828).